Reading from the N-terminus, the 235-residue chain is U1 small nuclear ribonucleoprotein C (235 aa).

The Matrin-type zinc finger occupies tyrosine 4–glutamate 36. The segment at glutamine 131–serine 235 is disordered. The segment covering asparagine 134 to asparagine 168 has biased composition (low complexity). Residues methionine 169–glutamate 189 are compositionally biased toward basic and acidic residues. Over residues proline 192 to asparagine 203 the composition is skewed to low complexity. Basic and acidic residues-rich tracts occupy residues serine 205 to lysine 217 and asparagine 225 to serine 235.

Belongs to the U1 small nuclear ribonucleoprotein C family. In terms of assembly, U1 snRNP is composed of the 7 core Sm proteins B/B', D1, D2, D3, E, F and G that assemble in a heptameric protein ring on the Sm site of the small nuclear RNA to form the core snRNP, and at least 3 U1 snRNP-specific proteins U1-70K, U1-A and U1-C. U1-C interacts with U1 snRNA and the 5' splice-site region of the pre-mRNA.

It localises to the nucleus. In terms of biological role, component of the spliceosomal U1 snRNP, which is essential for recognition of the pre-mRNA 5' splice-site and the subsequent assembly of the spliceosome. U1-C is directly involved in initial 5' splice-site recognition for both constitutive and regulated alternative splicing. The interaction with the 5' splice-site seems to precede base-pairing between the pre-mRNA and the U1 snRNA. Stimulates commitment or early (E) complex formation by stabilizing the base pairing of the 5' end of the U1 snRNA and the 5' splice-site region. The protein is U1 small nuclear ribonucleoprotein C of Plasmodium falciparum (isolate 3D7).